We begin with the raw amino-acid sequence, 211 residues long: Protein-methionine-sulfoxide reductase heme-binding subunit MsrQ (211 aa).

The next 4 membrane-spanning stretches (helical) occupy residues 10-30 (WLKVCLHLAGLLPFLWLVWAI), 82-102 (LWCFAWATLHLTSYALLELGV), 116-136 (PYLTLGIISWVILLALAFTST), and 153-173 (FVYLVAILAPIHYLWSVKIIS).

This sequence belongs to the MsrQ family. In terms of assembly, heterodimer of a catalytic subunit (MsrP) and a heme-binding subunit (MsrQ). FMN serves as cofactor. The cofactor is heme b.

Its subcellular location is the cell inner membrane. Functionally, part of the MsrPQ system that repairs oxidized periplasmic proteins containing methionine sulfoxide residues (Met-O), using respiratory chain electrons. Thus protects these proteins from oxidative-stress damage caused by reactive species of oxygen and chlorine generated by the host defense mechanisms. MsrPQ is essential for the maintenance of envelope integrity under bleach stress, rescuing a wide series of structurally unrelated periplasmic proteins from methionine oxidation, including the primary periplasmic chaperone SurA and the lipoprotein Pal. MsrQ provides electrons for reduction to the reductase catalytic subunit MsrP, using the quinone pool of the respiratory chain. This chain is Protein-methionine-sulfoxide reductase heme-binding subunit MsrQ, found in Shigella dysenteriae serotype 1 (strain Sd197).